The following is a 230-amino-acid chain: Orotidine 5'-phosphate decarboxylase (230 aa).

Substrate contacts are provided by residues aspartate 8, lysine 32, 59–68 (DLKLYDIPNT), threonine 118, arginine 178, glutamine 187, glycine 207, and arginine 208. The active-site Proton donor is lysine 61.

It belongs to the OMP decarboxylase family. Type 1 subfamily. In terms of assembly, homodimer.

The enzyme catalyses orotidine 5'-phosphate + H(+) = UMP + CO2. The protein operates within pyrimidine metabolism; UMP biosynthesis via de novo pathway; UMP from orotate: step 2/2. In terms of biological role, catalyzes the decarboxylation of orotidine 5'-monophosphate (OMP) to uridine 5'-monophosphate (UMP). The sequence is that of Orotidine 5'-phosphate decarboxylase from Nautilia profundicola (strain ATCC BAA-1463 / DSM 18972 / AmH).